We begin with the raw amino-acid sequence, 399 residues long: Protein DDI1 homolog 2 (399 aa).

Residues 1–81 enclose the Ubiquitin-like domain; sequence MLLTVYCVRR…VILRQKENAD (81 aa). A disordered region spans residues 99–134; it reads IAVPGTSNPQQRQLPRTQAQHSSPGEMASSPQGLDN. Over residues 103 to 131 the composition is skewed to polar residues; it reads GTSNPQQRQLPRTQAQHSSPGEMASSPQG. T104 is modified (phosphothreonine). Residues S121, S128, S150, and S194 each carry the phosphoserine modification. D252 is a catalytic residue. The short motif at 376–395 is the Ubiquitin-binding element; it reads EEIADQELAEAIQKSAEDAE.

This sequence belongs to the DDI1 family. Homodimer.

The protein resides in the cytoplasm. It localises to the cytosol. Its subcellular location is the chromosome. In terms of biological role, aspartic protease that mediates the cleavage of NFE2L1/NRF1 at 'Leu-104', thereby promoting release of NFE2L1/NRF1 from the endoplasmic reticulum membrane. Ubiquitination of NFE2L1/NRF1 is a prerequisite for cleavage, suggesting that DDI2 specifically recognizes and binds ubiquitinated NFE2L1/NRF1. Seems to act as a proteasomal shuttle which links the proteasome and replication fork proteins like RTF2. Required, with DDI1, for cellular survival following replication stress. Together or redudantly with DDI1, removes RTF2 from stalled forks to allow cell cycle progression after replication stress and maintains genome integrity. In Mus musculus (Mouse), this protein is Protein DDI1 homolog 2.